Consider the following 307-residue polypeptide: Furaquinocin biosynthesis prenyltransferase (307 aa).

Belongs to the aromatic prenyltransferase family. In terms of assembly, monomer.

It catalyses the reaction 2-O,3-dimethylflaviolin + (2E)-geranyl diphosphate = 6-linalyl-2-O,3-dimethylflaviolin + diphosphate. It carries out the reaction 2-O,3-dimethylflaviolin + (2E)-geranyl diphosphate + H(+) = 7-O-geranyl-2-O,3-dimethylflaviolin + diphosphate. With respect to regulation, does not require any metal cations for activity. Involved in the biosynthesis of furaquinocin. Catalyzes the transfer of a geranyl group to 2-methoxy-3-methyl-flaviolin to yield 6-prenyl-2-methoxy-3-methyl-flaviolin and 7-O-geranyl-2-methoxy-3-methyl-flaviolin in a 10:1 ratio. Can also use other substrates such as flaviolin or 1,3-dihydroxy naphthalene, and can also use DMAPP as prenyl donor. This is Furaquinocin biosynthesis prenyltransferase from Streptomyces sp. (strain KO-3988).